Here is a 1358-residue protein sequence, read N- to C-terminus: Phosphoinositide 3-kinase regulatory subunit 4 (1358 aa).

Glycine 2 carries N-myristoyl glycine lipidation. The Protein kinase domain occupies 26 to 324 (FEYDKSLGST…AFPEIFYTFL (299 aa)). Residues 32 to 40 (LGSTRFFKV) and lysine 53 contribute to the ATP site. Aspartate 148 (proton acceptor) is an active-site residue. HEAT repeat units follow at residues 413–450 (ILLD…LVKE), 458–495 (IYPE…TALR), and 572–610 (KAND…YVGW). A phosphoserine mark is found at serine 808, serine 813, serine 853, and serine 865. The tract at residues 875-898 (LPKGSDQEVIQTGKPPRSESSAGI) is disordered. 6 WD repeats span residues 991–1030 (EHKS…GKTT), 1040–1079 (RIGG…LPKS), 1093–1134 (KEDG…NAWT), 1139–1178 (LKSG…PISS), 1182–1223 (PSRA…RRFT), and 1237–1278 (PSPH…RSYV). Positions 1307 to 1326 (KQKVGPSDDTPRRGPESLPV) are disordered. A compositionally biased stretch (basic and acidic residues) spans 1315–1326 (DTPRRGPESLPV). Phosphothreonine is present on threonine 1316. One copy of the WD 7 repeat lies at 1327-1358 (GHHDIITDVATFQTTQGFIVTASRDGIVKVWK).

Belongs to the protein kinase superfamily. Ser/Thr protein kinase family. In terms of assembly, component of the PI3K (PI3KC3/PI3K-III/class III phosphatidylinositol 3-kinase) complex the core of which is composed of the catalytic subunit PIK3C3, the regulatory subunit PIK3R4 and BECN1 associating with additional regulatory/auxiliary subunits to form alternative complex forms. Alternative complex forms containing a fourth regulatory subunit in a mutually exclusive manner are PI3K complex I (PI3KC3-C1) containing ATG14, and PI3K complex II (PI3KC3-C2) containing UVRAG. PI3KC3-C1 displays a V-shaped architecture with PIK3R4 serving as a bridge between PIK3C3 and the ATG14:BECN1 subcomplex. Both, PI3KC3-C1 and PI3KC3-C2, can associate with further regulatory subunits, such as RUBCN, SH3GLB1/Bif-1, AMBRA1 and NRBF2. PI3KC3-C1 probably associates with PIK3CB. Interacts with RAB7A in the presence of PIK3C3/VPS34. Interacts with NRBF2. Interacts with ARMC3. It depends on Mn(2+) as a cofactor. Post-translationally, myristoylated. Probably autophosphorylated. In terms of tissue distribution, ubiquitously expressed.

It is found in the late endosome. Its subcellular location is the cytoplasmic vesicle. The protein localises to the autophagosome. It localises to the membrane. The catalysed reaction is L-seryl-[protein] + ATP = O-phospho-L-seryl-[protein] + ADP + H(+). It catalyses the reaction L-threonyl-[protein] + ATP = O-phospho-L-threonyl-[protein] + ADP + H(+). Regulatory subunit of the PI3K complex that mediates formation of phosphatidylinositol 3-phosphate; different complex forms are believed to play a role in multiple membrane trafficking pathways: PI3KC3-C1 is involved in initiation of autophagosomes and PI3KC3-C2 in maturation of autophagosomes and endocytosis. Involved in regulation of degradative endocytic trafficking and cytokinesis, probably in the context of PI3KC3-C2. This chain is Phosphoinositide 3-kinase regulatory subunit 4 (PIK3R4), found in Homo sapiens (Human).